We begin with the raw amino-acid sequence, 214 residues long: MVMMRIFFFLFLLAFPVFTANASVNDFCVANGPGARDTPSGFVCKNTAKVTAADFVYSGLAKPGNTTNIINAAVTPAFVGQFPGVIGLGVTLARLDLAPGGVIPMHTHPGASEILNVVEGTILAAFISSGNKVYEKALYPGDVMVFPQGLLDFQEITGKIAPGLCELRQRNPGLQILEFQHCFPTIFPPKTIAGTTCLDEATIKKLKSGLGGTN.

A signal peptide spans 1-22 (MVMMRIFFFLFLLAFPVFTANA). Cysteine 28 and cysteine 44 are disulfide-bonded. Residues 58-204 (SGLAKPGNTT…TTCLDEATIK (147 aa)) form the Cupin type-1 domain. Residues histidine 106, histidine 108, and glutamate 113 each contribute to the Mn(2+) site.

The protein belongs to the germin family. As to quaternary structure, oligomer (believed to be a pentamer but probably hexamer). In terms of tissue distribution, cotyledons and leaves.

The protein localises to the secreted. The protein resides in the extracellular space. It is found in the apoplast. In Ipomoea nil (Japanese morning glory), this protein is Germin-like protein (GLP).